A 170-amino-acid polypeptide reads, in one-letter code: Putative pre-16S rRNA nuclease (170 aa).

Belongs to the YqgF nuclease family.

It localises to the cytoplasm. In terms of biological role, could be a nuclease involved in processing of the 5'-end of pre-16S rRNA. This chain is Putative pre-16S rRNA nuclease, found in Synechococcus sp. (strain JA-2-3B'a(2-13)) (Cyanobacteria bacterium Yellowstone B-Prime).